The sequence spans 62 residues: Photosystem II reaction center protein H (62 aa).

Residues 30 to 50 (PVMAGIGFMLLIFLVTILQIY) form a helical membrane-spanning segment.

The protein belongs to the PsbH family. In terms of assembly, PSII is composed of 1 copy each of membrane proteins PsbA, PsbB, PsbC, PsbD, PsbE, PsbF, PsbH, PsbI, PsbJ, PsbK, PsbL, PsbM, PsbT, PsbX, PsbY, Psb30/Ycf12, peripheral proteins PsbO, CyanoQ (PsbQ), PsbU, PsbV and a large number of cofactors. It forms dimeric complexes.

The protein resides in the cellular thylakoid membrane. In terms of biological role, one of the components of the core complex of photosystem II (PSII), required for its stability and/or assembly. PSII is a light-driven water:plastoquinone oxidoreductase that uses light energy to abstract electrons from H(2)O, generating O(2) and a proton gradient subsequently used for ATP formation. It consists of a core antenna complex that captures photons, and an electron transfer chain that converts photonic excitation into a charge separation. This chain is Photosystem II reaction center protein H, found in Prochlorococcus marinus (strain MIT 9303).